A 482-amino-acid polypeptide reads, in one-letter code: BEL1-like homeodomain protein 7 (482 aa).

Residues 118-134 (SKYLKAAQELLDETVNV) form an SR/KY domain region. The interval 167 to 238 (ERQELQSKLS…CLRDAISGQI (72 aa)) is BELL domain. A DNA-binding region (homeobox) is located at residues 285–347 (TWRPQRGLPD…NARVRLWKPM (63 aa)). Positions 358–401 (DALQENDPNQSSENTPEITEIQELQTESSSNNGHVPGVASSSMR) are disordered. Over residues 363–401 (NDPNQSSENTPEITEIQELQTESSSNNGHVPGVASSSMR) the composition is skewed to polar residues.

Belongs to the TALE/BELL homeobox family. In terms of assembly, may form heterodimeric complexes with TALE/KNOX proteins.

It is found in the nucleus. The protein is BEL1-like homeodomain protein 7 (BLH7) of Arabidopsis thaliana (Mouse-ear cress).